The following is a 318-amino-acid chain: MDARSELHHYNPYRVFSRSEWANLRQDTPMTLDLAEVSTLRSLHDRLDITEVEEIYLPMSRLLSIHVGAMQQLYYAQRRFLGVVERKMPYIIGVAGSVAVGKSTTARVLQALLARWSPRPKVDLITTDGFLHPNALLERAGLMQKKGFPESYDLPALLAFLSDIKSGRRKVRAPIYSHLTYDIVPNKFAVVDRPDILIVEGVNVLQTGRLPRDGKAVPVVSDFFDFSVYIDADEPVLRDWYIRRFLALRDTAFHDPRSYFHRYAPLSDEEATATAIAIWERTNLANLEDNILPTRPRATLILKKGADHVVDSVALRRL.

96–103 is a binding site for ATP; sequence GSVAVGKS.

This sequence belongs to the prokaryotic pantothenate kinase family.

The protein resides in the cytoplasm. The catalysed reaction is (R)-pantothenate + ATP = (R)-4'-phosphopantothenate + ADP + H(+). The protein operates within cofactor biosynthesis; coenzyme A biosynthesis; CoA from (R)-pantothenate: step 1/5. This is Pantothenate kinase from Rhodopseudomonas palustris (strain BisB5).